A 383-amino-acid polypeptide reads, in one-letter code: Lipid-A-disaccharide synthase (383 aa).

This sequence belongs to the LpxB family.

The enzyme catalyses a lipid X + a UDP-2-N,3-O-bis[(3R)-3-hydroxyacyl]-alpha-D-glucosamine = a lipid A disaccharide + UDP + H(+). The protein operates within bacterial outer membrane biogenesis; LPS lipid A biosynthesis. In terms of biological role, condensation of UDP-2,3-diacylglucosamine and 2,3-diacylglucosamine-1-phosphate to form lipid A disaccharide, a precursor of lipid A, a phosphorylated glycolipid that anchors the lipopolysaccharide to the outer membrane of the cell. This Aliivibrio salmonicida (strain LFI1238) (Vibrio salmonicida (strain LFI1238)) protein is Lipid-A-disaccharide synthase.